A 249-amino-acid chain; its full sequence is tRNA (guanine-N(1)-)-methyltransferase (249 aa).

Residues G121 and L141–L146 each bind S-adenosyl-L-methionine.

It belongs to the RNA methyltransferase TrmD family. Homodimer.

The protein localises to the cytoplasm. It catalyses the reaction guanosine(37) in tRNA + S-adenosyl-L-methionine = N(1)-methylguanosine(37) in tRNA + S-adenosyl-L-homocysteine + H(+). Specifically methylates guanosine-37 in various tRNAs. In Cereibacter sphaeroides (strain KD131 / KCTC 12085) (Rhodobacter sphaeroides), this protein is tRNA (guanine-N(1)-)-methyltransferase.